The primary structure comprises 208 residues: V-type ATP synthase subunit E (208 aa).

The protein belongs to the V-ATPase E subunit family.

Its function is as follows. Produces ATP from ADP in the presence of a proton gradient across the membrane. This Chlamydia trachomatis serovar A (strain ATCC VR-571B / DSM 19440 / HAR-13) protein is V-type ATP synthase subunit E.